A 153-amino-acid chain; its full sequence is Profilin (153 aa).

Belongs to the profilin family. In terms of assembly, occurs in many kinds of cells as a complex with monomeric actin in a 1:1 ratio.

The protein resides in the cytoplasm. The protein localises to the cytoskeleton. In terms of biological role, binds to actin and affects the structure of the cytoskeleton. At high concentrations, profilin prevents the polymerization of actin, whereas it enhances it at low concentrations. By binding to PIP2, it inhibits the formation of IP3 and DG. This chain is Profilin, found in Tetrahymena pyriformis.